The sequence spans 429 residues: Enolase (429 aa).

Residue Gln162 coordinates (2R)-2-phosphoglycerate. The active-site Proton donor is Glu204. The Mg(2+) site is built by Asp241, Glu283, and Asp310. (2R)-2-phosphoglycerate-binding residues include Lys335, Arg364, Ser365, and Lys386. The active-site Proton acceptor is Lys335.

This sequence belongs to the enolase family. Mg(2+) serves as cofactor.

Its subcellular location is the cytoplasm. The protein localises to the secreted. It is found in the cell surface. It carries out the reaction (2R)-2-phosphoglycerate = phosphoenolpyruvate + H2O. The protein operates within carbohydrate degradation; glycolysis; pyruvate from D-glyceraldehyde 3-phosphate: step 4/5. Functionally, catalyzes the reversible conversion of 2-phosphoglycerate (2-PG) into phosphoenolpyruvate (PEP). It is essential for the degradation of carbohydrates via glycolysis. This chain is Enolase, found in Mycolicibacterium vanbaalenii (strain DSM 7251 / JCM 13017 / BCRC 16820 / KCTC 9966 / NRRL B-24157 / PYR-1) (Mycobacterium vanbaalenii).